A 618-amino-acid chain; its full sequence is MILQNKTFDLNPNDIAGLELVCQTLRNRILEVVSANGGHLSSSLGAVELIVGMHALFDCQKNPFIFDTSHQAYAHKLLTGRFESFSTLRQFQGLSGFTKPSESAYDYFIAGHSSTSVSIGVGVAKAFRLKQTLGMPIALLGDGSISAGIFYEALNELGDRKYPMIMILNDNEMSISTPIGALSKALSQLMKGPFYQSFRSKVKKILSTLPESVNYLASRFEESFKLITPGVFFEELGINYIGPINGHDLGTIIETLKLAKELKEPVLIHAQTLKGKGYKIAEGRYEKWHGVGPFDLDTGLSKKSKSATLSPTEAYSNTLLELAKKDEKIVGVTAAMPSGTGLDKLIDAYPLRFFDVAIAEQHALTSSSAMAKEGFKPFVSIYSTFLQRAYDSIVHDACISSLPIKLAIDRAGIVGEDGETHQGLLDVSYLRSIPNMVIFAPRDNETLKNAVYFANEHDSSPCAFRYPRGSFALKEGVFEPSGFVLGRSELLKKEGEILLIGYGNGVGRAHLVQLALKEKNIECALLDLRFLKPLDHNLSAIIAPYQKLYVFSDNYKLGGVASAILEFLSEQNILKPVKSFEITDEFIMHGNTALVEKSLGLDTESLTDAILKDLGQER.

Thiamine diphosphate-binding positions include His-70 and Gly-111–Ser-113. Asp-142 contacts Mg(2+). Thiamine diphosphate contacts are provided by residues Gly-143–Ser-144, Asn-171, Tyr-278, and Glu-360. Position 171 (Asn-171) interacts with Mg(2+).

It belongs to the transketolase family. DXPS subfamily. Homodimer. The cofactor is Mg(2+). Requires thiamine diphosphate as cofactor.

The enzyme catalyses D-glyceraldehyde 3-phosphate + pyruvate + H(+) = 1-deoxy-D-xylulose 5-phosphate + CO2. The protein operates within metabolic intermediate biosynthesis; 1-deoxy-D-xylulose 5-phosphate biosynthesis; 1-deoxy-D-xylulose 5-phosphate from D-glyceraldehyde 3-phosphate and pyruvate: step 1/1. Catalyzes the acyloin condensation reaction between C atoms 2 and 3 of pyruvate and glyceraldehyde 3-phosphate to yield 1-deoxy-D-xylulose-5-phosphate (DXP). The sequence is that of 1-deoxy-D-xylulose-5-phosphate synthase from Helicobacter pylori (strain J99 / ATCC 700824) (Campylobacter pylori J99).